The sequence spans 291 residues: Elongation factor Ts (291 aa).

The interval 84-87 (TDFV) is involved in Mg(2+) ion dislocation from EF-Tu.

This sequence belongs to the EF-Ts family.

Its subcellular location is the cytoplasm. Functionally, associates with the EF-Tu.GDP complex and induces the exchange of GDP to GTP. It remains bound to the aminoacyl-tRNA.EF-Tu.GTP complex up to the GTP hydrolysis stage on the ribosome. This chain is Elongation factor Ts, found in Bifidobacterium adolescentis (strain ATCC 15703 / DSM 20083 / NCTC 11814 / E194a).